A 721-amino-acid chain; its full sequence is Polyribonucleotide nucleotidyltransferase (721 aa).

Residues D487 and D493 each coordinate Mg(2+). Residues P554 to I613 form the KH domain. Residues N623–K691 enclose the S1 motif domain. A disordered region spans residues T697–E721. Basic and acidic residues predominate over residues L701–A714.

Belongs to the polyribonucleotide nucleotidyltransferase family. Mg(2+) is required as a cofactor.

It is found in the cytoplasm. The catalysed reaction is RNA(n+1) + phosphate = RNA(n) + a ribonucleoside 5'-diphosphate. Its function is as follows. Involved in mRNA degradation. Catalyzes the phosphorolysis of single-stranded polyribonucleotides processively in the 3'- to 5'-direction. The chain is Polyribonucleotide nucleotidyltransferase from Rhodopseudomonas palustris (strain BisA53).